The primary structure comprises 340 residues: DNA-directed RNA polymerase subunit alpha (340 aa).

The segment at 1–236 (MLSLSKNWNT…EQLQLFISFE (236 aa)) is alpha N-terminal domain (alpha-NTD). The interval 246–340 (TDALPFSPYL…LSNRYEDSYN (95 aa)) is alpha C-terminal domain (alpha-CTD).

The protein belongs to the RNA polymerase alpha chain family. Homodimer. The RNAP catalytic core consists of 2 alpha, 1 beta, 1 beta' and 1 omega subunit. When a sigma factor is associated with the core the holoenzyme is formed, which can initiate transcription.

The catalysed reaction is RNA(n) + a ribonucleoside 5'-triphosphate = RNA(n+1) + diphosphate. DNA-dependent RNA polymerase catalyzes the transcription of DNA into RNA using the four ribonucleoside triphosphates as substrates. In Rickettsia felis (strain ATCC VR-1525 / URRWXCal2) (Rickettsia azadi), this protein is DNA-directed RNA polymerase subunit alpha.